The following is a 67-amino-acid chain: uncharacterized protein (67 aa).

This is an uncharacterized protein from Measles virus (strain Halle) (MeV).